The following is a 235-amino-acid chain: UPF0502 protein Bcep18194_B0081 (235 aa).

It belongs to the UPF0502 family.

This is UPF0502 protein Bcep18194_B0081 from Burkholderia lata (strain ATCC 17760 / DSM 23089 / LMG 22485 / NCIMB 9086 / R18194 / 383).